The chain runs to 353 residues: Photosystem II D2 protein (353 aa).

Thr-2 bears the N-acetylthreonine mark. Thr-2 is subject to Phosphothreonine. The helical transmembrane segment at 41-61 (CAYFALGGWFTGTTFVTSWYT) threads the bilayer. His-118 contacts chlorophyll a. The helical transmembrane segment at 125–141 (GFMLRQFELARSVQLRP) threads the bilayer. 2 residues coordinate pheophytin a: Gln-130 and Asn-143. Residues 153–166 (VFVSVFLIYPLGQS) form a helical membrane-spanning segment. His-198 contributes to the chlorophyll a binding site. Residues 208 to 228 (AALLCAIHGATVENTLFEDGD) form a helical membrane-spanning segment. His-215 and Phe-262 together coordinate a plastoquinone. Residue His-215 coordinates Fe cation. His-269 provides a ligand contact to Fe cation. The helical transmembrane segment at 279–295 (GLWMSAIGVVGLALNLR) threads the bilayer.

It belongs to the reaction center PufL/M/PsbA/D family. PSII is composed of 1 copy each of membrane proteins PsbA, PsbB, PsbC, PsbD, PsbE, PsbF, PsbH, PsbI, PsbJ, PsbK, PsbL, PsbM, PsbT, PsbX, PsbY, PsbZ, Psb30/Ycf12, at least 3 peripheral proteins of the oxygen-evolving complex and a large number of cofactors. It forms dimeric complexes. It depends on The D1/D2 heterodimer binds P680, chlorophylls that are the primary electron donor of PSII, and subsequent electron acceptors. It shares a non-heme iron and each subunit binds pheophytin, quinone, additional chlorophylls, carotenoids and lipids. There is also a Cl(-1) ion associated with D1 and D2, which is required for oxygen evolution. The PSII complex binds additional chlorophylls, carotenoids and specific lipids. as a cofactor.

The protein resides in the plastid. Its subcellular location is the chloroplast thylakoid membrane. The catalysed reaction is 2 a plastoquinone + 4 hnu + 2 H2O = 2 a plastoquinol + O2. Photosystem II (PSII) is a light-driven water:plastoquinone oxidoreductase that uses light energy to abstract electrons from H(2)O, generating O(2) and a proton gradient subsequently used for ATP formation. It consists of a core antenna complex that captures photons, and an electron transfer chain that converts photonic excitation into a charge separation. The D1/D2 (PsbA/PsbD) reaction center heterodimer binds P680, the primary electron donor of PSII as well as several subsequent electron acceptors. D2 is needed for assembly of a stable PSII complex. The sequence is that of Photosystem II D2 protein from Saccharum hybrid (Sugarcane).